The sequence spans 254 residues: Ubiquinone/menaquinone biosynthesis C-methyltransferase UbiE (254 aa).

S-adenosyl-L-methionine is bound by residues threonine 77, aspartate 98, 126 to 127 (NA), and serine 143.

Belongs to the class I-like SAM-binding methyltransferase superfamily. MenG/UbiE family.

The enzyme catalyses a 2-demethylmenaquinol + S-adenosyl-L-methionine = a menaquinol + S-adenosyl-L-homocysteine + H(+). It catalyses the reaction a 2-methoxy-6-(all-trans-polyprenyl)benzene-1,4-diol + S-adenosyl-L-methionine = a 5-methoxy-2-methyl-3-(all-trans-polyprenyl)benzene-1,4-diol + S-adenosyl-L-homocysteine + H(+). It functions in the pathway quinol/quinone metabolism; menaquinone biosynthesis; menaquinol from 1,4-dihydroxy-2-naphthoate: step 2/2. The protein operates within cofactor biosynthesis; ubiquinone biosynthesis. Functionally, methyltransferase required for the conversion of demethylmenaquinol (DMKH2) to menaquinol (MKH2) and the conversion of 2-polyprenyl-6-methoxy-1,4-benzoquinol (DDMQH2) to 2-polyprenyl-3-methyl-6-methoxy-1,4-benzoquinol (DMQH2). The protein is Ubiquinone/menaquinone biosynthesis C-methyltransferase UbiE of Hydrogenovibrio crunogenus (strain DSM 25203 / XCL-2) (Thiomicrospira crunogena).